The primary structure comprises 500 residues: Coiled-coil domain-containing protein 85A (500 aa).

Residues 1–23 (MSKAAGGSAPAAESCPSAPAGAS) show a composition bias toward low complexity. A disordered region spans residues 1-30 (MSKAAGGSAPAAESCPSAPAGASTPTGVDD). 2 coiled-coil regions span residues 38–104 (ELLQ…RDLC) and 132–171 (MHKEVALYLQKLKELEVKQEEVVKENMELKELCMLLDEEK). Disordered regions lie at residues 200–405 (RDVG…SGMN) and 426–465 (NRMLPQGSFRLSSGADGNNSSLNSPASFSGHTTPSQQPEP). A compositionally biased stretch (low complexity) spans 204-215 (DGSSTSSTGSTD). Positions 231–254 (HLQKPRSEGSPEHTKHRSTSPEHL) are enriched in basic and acidic residues. The span at 372–381 (GSGGSGGGSR) shows a compositional bias: gly residues. Residues 383–395 (GTLRRPAQEDSSS) are compositionally biased toward basic and acidic residues. Positions 404 to 429 (MNESTLSYVRQLEARVRQLEEENRML) form a coiled coil. Residues 434–463 (FRLSSGADGNNSSLNSPASFSGHTTPSQQP) are compositionally biased toward polar residues. Position 488 is an asymmetric dimethylarginine (Arg-488).

Belongs to the CCDC85 family. May interact with ARVCF; CTNND1; CTNND2 and PKP4.

Its subcellular location is the cell junction. It is found in the adherens junction. Its function is as follows. May play a role in cell-cell adhesion and epithelium development through its interaction with proteins of the beta-catenin family. The chain is Coiled-coil domain-containing protein 85A (Ccdc85a) from Mus musculus (Mouse).